Here is a 271-residue protein sequence, read N- to C-terminus: 4-hydroxy-tetrahydrodipicolinate reductase (271 aa).

NAD(+)-binding positions include 10–15 (GAGGRM), Glu36, 100–102 (GTT), and 124–127 (SGNM). The active-site Proton donor/acceptor is the His157. His158 is a (S)-2,3,4,5-tetrahydrodipicolinate binding site. Catalysis depends on Lys161, which acts as the Proton donor. 167–168 (GT) lines the (S)-2,3,4,5-tetrahydrodipicolinate pocket.

Belongs to the DapB family.

The protein resides in the cytoplasm. The catalysed reaction is (S)-2,3,4,5-tetrahydrodipicolinate + NAD(+) + H2O = (2S,4S)-4-hydroxy-2,3,4,5-tetrahydrodipicolinate + NADH + H(+). It catalyses the reaction (S)-2,3,4,5-tetrahydrodipicolinate + NADP(+) + H2O = (2S,4S)-4-hydroxy-2,3,4,5-tetrahydrodipicolinate + NADPH + H(+). Its pathway is amino-acid biosynthesis; L-lysine biosynthesis via DAP pathway; (S)-tetrahydrodipicolinate from L-aspartate: step 4/4. Its function is as follows. Catalyzes the conversion of 4-hydroxy-tetrahydrodipicolinate (HTPA) to tetrahydrodipicolinate. This Rhodopseudomonas palustris (strain BisB5) protein is 4-hydroxy-tetrahydrodipicolinate reductase.